The chain runs to 170 residues: Urease accessory protein UreE (170 aa).

Belongs to the UreE family.

The protein localises to the cytoplasm. Its function is as follows. Involved in urease metallocenter assembly. Binds nickel. Probably functions as a nickel donor during metallocenter assembly. This Helicobacter pylori (strain HPAG1) protein is Urease accessory protein UreE.